The following is a 168-amino-acid chain: Transcriptional repressor NrdR (168 aa).

A zinc finger lies at 3 to 34 (CPYCGFAQDRVVDSRESKEADSIRRRRECERC). The ATP-cone domain maps to 49 to 139 (YMVVKKDGRR…VYRDFKDVNE (91 aa)).

It belongs to the NrdR family. Zn(2+) serves as cofactor.

In terms of biological role, negatively regulates transcription of bacterial ribonucleotide reductase nrd genes and operons by binding to NrdR-boxes. The polypeptide is Transcriptional repressor NrdR (Acidobacterium capsulatum (strain ATCC 51196 / DSM 11244 / BCRC 80197 / JCM 7670 / NBRC 15755 / NCIMB 13165 / 161)).